Here is a 169-residue protein sequence, read N- to C-terminus: Ubiquitin-conjugating enzyme E2 2 (169 aa).

Residues Ala-4 to Val-150 form the UBC core domain. Catalysis depends on Cys-88, which acts as the Glycyl thioester intermediate.

Belongs to the ubiquitin-conjugating enzyme family.

The protein localises to the cytoplasm. It localises to the nucleus. It catalyses the reaction S-ubiquitinyl-[E1 ubiquitin-activating enzyme]-L-cysteine + [E2 ubiquitin-conjugating enzyme]-L-cysteine = [E1 ubiquitin-activating enzyme]-L-cysteine + S-ubiquitinyl-[E2 ubiquitin-conjugating enzyme]-L-cysteine.. The protein operates within protein modification; protein ubiquitination. In terms of biological role, catalyzes the covalent attachment of ubiquitin to other proteins. Plays a role in transcription regulation by catalyzing the monoubiquitination of histone H2B to form H2BK123ub1. H2BK123ub1 gives a specific tag for epigenetic transcriptional activation and is also a prerequisite for H3K4me and H3K79me formation. Also involved in postreplication repair of UV-damaged DNA, in N-end rule-dependent protein degradation and in sporulation. The protein is Ubiquitin-conjugating enzyme E2 2 (UBC2) of Cryptococcus neoformans var. neoformans serotype D (strain B-3501A) (Filobasidiella neoformans).